A 283-amino-acid polypeptide reads, in one-letter code: ATP phosphoribosyltransferase (283 aa).

This sequence belongs to the ATP phosphoribosyltransferase family. Long subfamily. Mg(2+) is required as a cofactor.

Its subcellular location is the cytoplasm. The catalysed reaction is 1-(5-phospho-beta-D-ribosyl)-ATP + diphosphate = 5-phospho-alpha-D-ribose 1-diphosphate + ATP. The protein operates within amino-acid biosynthesis; L-histidine biosynthesis; L-histidine from 5-phospho-alpha-D-ribose 1-diphosphate: step 1/9. Its activity is regulated as follows. Feedback inhibited by histidine. In terms of biological role, catalyzes the condensation of ATP and 5-phosphoribose 1-diphosphate to form N'-(5'-phosphoribosyl)-ATP (PR-ATP). Has a crucial role in the pathway because the rate of histidine biosynthesis seems to be controlled primarily by regulation of HisG enzymatic activity. In Salinibacter ruber (strain DSM 13855 / M31), this protein is ATP phosphoribosyltransferase.